A 175-amino-acid chain; its full sequence is Alpha-crystallin B chain (175 aa).

Met-1 is modified (N-acetylmethionine). The residue at position 19 (Ser-19) is a Phosphoserine. An O-linked (GlcNAc) serine glycan is attached at Ser-41. Ser-45 and Ser-59 each carry phosphoserine. A sHSP domain is found at 56–164 (RAPSWIDTGL…PERTIPITRE (109 aa)). His-83 lines the Zn(2+) pocket. Lys-92 carries the post-translational modification N6-acetyllysine. The Zn(2+) site is built by His-104, Glu-106, His-111, and His-119. Residues 142 to 175 (VLTVNGPRRQASGPERTIPITREEKPAVTAAPKK) form a disordered region. Lys-166 is modified (N6-acetyllysine). Thr-170 carries O-linked (GlcNAc) threonine glycosylation.

It belongs to the small heat shock protein (HSP20) family. As to quaternary structure, heteromer composed of three CRYAA and one CRYAB subunits. Aggregates with homologous proteins, including the small heat shock protein HSPB1, to form large heteromeric complexes. Inter-subunit bridging via zinc ions enhances stability, which is crucial as there is no protein turn over in the lens. Interacts with HSPBAP1 and TTN/titin. Interacts with TMEM109; in the cellular response to DNA damage. Interacts with DES; binds rapidly during early stages of DES filament assembly and a reduced binding seen in the later stages. Interacts with TMED10; the interaction mediates the translocation from the cytoplasm into the ERGIC (endoplasmic reticulum-Golgi intermediate compartment) and thereby secretion. Interacts with ATP6V1A and with MTOR, forming a ternary complex.

The protein localises to the cytoplasm. It is found in the nucleus. It localises to the secreted. The protein resides in the lysosome. Its function is as follows. May contribute to the transparency and refractive index of the lens. Has chaperone-like activity, preventing aggregation of various proteins under a wide range of stress conditions. In lens epithelial cells, stabilizes the ATP6V1A protein, preventing its degradation by the proteasome. The polypeptide is Alpha-crystallin B chain (CRYAB) (Sus scrofa (Pig)).